The chain runs to 856 residues: Dynamin-1 (856 aa).

The Dynamin-type G domain occupies 28 to 294 (DLDLPQIAVV…LTNHIRDTLP (267 aa)). Positions 38–45 (GGQSAGKS) are G1 motif. The GDP site is built by serine 41, glycine 43, lysine 44, serine 45, serine 46, arginine 59, and glycine 60. The segment at 64 to 66 (VTR) is G2 motif. Tyrosine 80 is modified (phosphotyrosine). A 3'-nitrotyrosine; alternate modification is found at tyrosine 125. Tyrosine 125 bears the Phosphotyrosine; alternate mark. Positions 136 to 139 (DLPG) are G3 motif. The segment at 205–208 (TKLD) is G4 motif. Residues lysine 206, aspartate 208, aspartate 211, asparagine 236, arginine 237, and glutamine 239 each coordinate GDP. Positions 235-238 (VNRS) are G5 motif. Phosphoserine is present on residues serine 306 and serine 347. Residue tyrosine 354 is modified to Phosphotyrosine. Position 512 is a phosphoserine (serine 512). Residues 519-625 (LVIRKGWLTI…WKASFLRAGV (107 aa)) form the PH domain. The GED domain maps to 659-750 (VETIRNLVDS…IIGDINTTTV (92 aa)). The disordered stretch occupies residues 750-856 (VSTPMPPPVD…PIGSGKSIPS (107 aa)). Over residues 763-781 (LQVQSVPTGRRSPTSSPTP) the composition is skewed to polar residues. Residues serine 774 and serine 778 each carry the phosphoserine modification. Arginine 796 carries the post-translational modification Omega-N-methylarginine. Serine 822 carries the phosphoserine modification. Over residues 825 to 844 (PFGPPPQVPSRPNRAPPGVP) the composition is skewed to pro residues.

The protein belongs to the TRAFAC class dynamin-like GTPase superfamily. Dynamin/Fzo/YdjA family. As to quaternary structure, homodimer; homodimerization is mediated by the dynamin-type G domain which promotes assembly-stimulated GTPase activity. Homo-tetramer formed from two dimers in the absence of lipid. Oligomerizes into a helical polymer that self-assembles around the vesicle membrane, when associated to the menbrane through lipid binding. Interacts (via C-terminal proline-rich domain (PRD)) with SNX9 (via SH3 domain); this interaction allows regulation of DNM1 self-assembly during late stages of endocytic vesicle formation and supports DNM1's early functions in accelerating clathrin-coated pits (CCPs) maturation in non neuronals cell. Interacts (via C-terminal proline-rich domain (PRD)) with MYO1E (via SH3 domain); this interaction regulates receptor-mediated endocytosis. Interacts with SNX33 (via SH3 domain); this interaction decreases DNM1-dependent endocytosis. Interacts with DIAPH1. Interacts with GRB2 (via SH3 domain); this interaction mediates disassembly of DNM1 polymers, therefore modulates self-assembly. Forms a complex with BIN1 (via SH3 domain) and SH3GL2 (via SH3 domain). Forms a complex with SH3GL2 (via SH3 domain) and AMPH (via SH3 domain). Forms a complex with SH3GL2 (via SH3 domain) and SYNJ1. Interacts with AMPH. Interacts (via C-terminal proline-rich domain (PRD)) with SYT1; this interaction facilitates vesicle fission during clathrin-mediated endocytosis (CME). Interacts (via C-terminal proline-rich domain (PRD)) with PLCG1 (via SH3 domain); this interaction stimulates the release of GDP from DNM1 and enhances DNM1-dependent endocytosis. Interacts with SNPH; this interaction inhibits the binding of DNM1 to AMPH and DNM1-receptor-mediated endocytosis. Interacts with CAV1. Interacts with SH3GLB1 (via SH3 domain). Interacts with PACSIN1 (via SH3 domain), PACSIN2 (via SH3 domain) and PACSIN3 (via SH3 domain). Interacts with UNC119; this interaction decreases DNM1's GTPase activity and affects DNM1's interaction with AMPH. Interacts with AMPH. Interacts (GTP-bound form) with DNAJC6; this interaction allows clathrin-coated vesicle (CCV) formation at the plasma membrane. Phosphorylation at Ser-774 by GSK3B/GSK3-beta leads to inactivation of receptor-mediated endocytosis in non-neuronal cells. Dephosphorylation at Ser-774, through the EGFR downstream signaling, leads to activation and regulates early stages of clathrin-mediated endocytosis (CME).

It localises to the cell membrane. The protein resides in the membrane. The protein localises to the clathrin-coated pit. It is found in the cytoplasmic vesicle. Its subcellular location is the presynapse. It localises to the secretory vesicle. The protein resides in the chromaffin granule. The enzyme catalyses GTP + H2O = GDP + phosphate + H(+). Catalyzes the hydrolysis of GTP and utilizes this energy to mediate vesicle scission and participates in many forms of endocytosis, such as clathrin-mediated endocytosis or synaptic vesicle endocytosis as well as rapid endocytosis (RE). Associates to the membrane, through lipid binding, and self-assembles into rings and stacks of interconnected rings through oligomerization to form a helical polymer around the vesicle membrane leading to constriction of invaginated coated pits around their necks. Self-assembly of the helical polymer induces membrane tubules narrowing until the polymer reaches a length sufficient to trigger GTP hydrolysis. Depending on the curvature imposed on the tubules, membrane detachment from the helical polymer upon GTP hydrolysis can cause spontaneous hemifission followed by complete fission. May play a role in regulating early stages of clathrin-mediated endocytosis in non-neuronal cells through its activation by dephosphorylation via the signaling downstream of EGFR. Controls vesicle size at a step before fission, during formation of membrane pits, at hippocampal synapses. Controls plastic adaptation of the synaptic vesicle recycling machinery to high levels of activity. Mediates rapid endocytosis (RE), a Ca(2+)-dependent and clathrin- and K(+)-independent process in chromaffin cells. Microtubule-associated force-producing protein involved in producing microtubule bundles and able to bind and hydrolyze GTP. Through its interaction with DNAJC6, acts during the early steps of clathrin-coated vesicle (CCV) formation. The polypeptide is Dynamin-1 (Bos taurus (Bovine)).